The primary structure comprises 229 residues: 23 kDa piroplasm membrane protein (229 aa).

Positions 1-19 are cleaved as a signal peptide; sequence MNKYFKVFFFVLLTHALKS. Residues 20–203 lie on the Extracellular side of the membrane; sequence ALIFGQATLQ…EKEDTNKKKY (184 aa). The helical transmembrane segment at 204 to 224 threads the bilayer; it reads VLMVVVVVVFVVVASLVVFLV. Over 225–229 the chain is Cytoplasmic; the sequence is KFCLK.

The protein localises to the membrane. The sequence is that of 23 kDa piroplasm membrane protein from Theileria parva (East coast fever infection agent).